The primary structure comprises 235 residues: 5'-methylthioadenosine/S-adenosylhomocysteine nucleosidase (235 aa).

Glutamate 12 functions as the Proton acceptor in the catalytic mechanism. Residues glycine 78, isoleucine 152, and 173–174 contribute to the substrate site; that span reads ME. The active-site Proton donor is the aspartate 197.

This sequence belongs to the PNP/UDP phosphorylase family. MtnN subfamily. In terms of assembly, homodimer.

It carries out the reaction S-adenosyl-L-homocysteine + H2O = S-(5-deoxy-D-ribos-5-yl)-L-homocysteine + adenine. The catalysed reaction is S-methyl-5'-thioadenosine + H2O = 5-(methylsulfanyl)-D-ribose + adenine. The enzyme catalyses 5'-deoxyadenosine + H2O = 5-deoxy-D-ribose + adenine. It participates in amino-acid biosynthesis; L-methionine biosynthesis via salvage pathway; S-methyl-5-thio-alpha-D-ribose 1-phosphate from S-methyl-5'-thioadenosine (hydrolase route): step 1/2. Its function is as follows. Catalyzes the irreversible cleavage of the glycosidic bond in both 5'-methylthioadenosine (MTA) and S-adenosylhomocysteine (SAH/AdoHcy) to adenine and the corresponding thioribose, 5'-methylthioribose and S-ribosylhomocysteine, respectively. Also cleaves 5'-deoxyadenosine, a toxic by-product of radical S-adenosylmethionine (SAM) enzymes, into 5-deoxyribose and adenine. Thus, is required for in vivo function of the radical SAM enzymes biotin synthase and lipoic acid synthase, that are inhibited by 5'-deoxyadenosine accumulation. The sequence is that of 5'-methylthioadenosine/S-adenosylhomocysteine nucleosidase from Buchnera aphidicola subsp. Schizaphis graminum (strain Sg).